The sequence spans 68 residues: uncharacterized protein (68 aa).

This is an uncharacterized protein from Homo sapiens (Human).